Here is a 393-residue protein sequence, read N- to C-terminus: Putative N(4)-(beta-N-acetylglucosaminyl)-L-asparaginase GH22932 (393 aa).

A disordered region spans residues alanine 15 to serine 41. Residues isoleucine 19 to serine 41 are compositionally biased toward polar residues. Cystine bridges form between cysteine 100/cysteine 105 and cysteine 199/cysteine 215. Threonine 246 acts as the Nucleophile in catalysis. Substrate is bound by residues arginine 274 to aspartate 277 and threonine 297 to glycine 300. The cysteines at positions 357 and 381 are disulfide-linked.

Belongs to the Ntn-hydrolase family. As to quaternary structure, heterotetramer of two alpha and two beta chains arranged as a dimer of alpha/beta heterodimers. Post-translationally, cleaved into an alpha and beta chain by autocatalysis; this activates the enzyme. The N-terminal residue of the beta subunit is responsible for the nucleophile hydrolase activity.

The catalysed reaction is N(4)-(beta-N-acetyl-D-glucosaminyl)-L-asparagine + H2O = N-acetyl-beta-D-glucosaminylamine + L-aspartate + H(+). In terms of biological role, cleaves the GlcNAc-Asn bond which joins oligosaccharides to the peptide of asparagine-linked glycoproteins. This is Putative N(4)-(beta-N-acetylglucosaminyl)-L-asparaginase GH22932 from Drosophila grimshawi (Hawaiian fruit fly).